Here is a 721-residue protein sequence, read N- to C-terminus: Translation initiation factor eIF2B subunit epsilon (721 aa).

The segment covering 1–13 has biased composition (low complexity); sequence MAAPVVAPPGVVV. The tract at residues 1–40 is disordered; the sequence is MAAPVVAPPGVVVSRANKRSGAGPGGSGGGGARGAEEEPP. Residue Ala2 is modified to N-acetylalanine. At Arg19 the chain carries Omega-N-methylarginine. A compositionally biased stretch (gly residues) spans 22-33; sequence AGPGGSGGGGAR. Ser27 is subject to Phosphoserine. Glycyl lysine isopeptide (Lys-Gly) (interchain with G-Cter in ubiquitin) cross-links involve residues Lys61 and Lys103. Ser130 is subject to Phosphoserine. Residues Lys141 and Lys217 each participate in a glycyl lysine isopeptide (Lys-Gly) (interchain with G-Cter in ubiquitin) cross-link. Thr322 carries the post-translational modification Phosphothreonine. Disordered regions lie at residues 444–483 and 523–547; these read PEGS…MKGY and EESE…SPQM. Phosphoserine occurs at positions 450, 466, 469, 532, and 540. Acidic residues-rich tracts occupy residues 456 to 471 and 523 to 537; these read AEED…DSGA and EESE…DSEE. Positions 543–720 constitute a W2 domain; the sequence is GSPQMDDIKV…KEAEEESSED (178 aa). At Ser544 the chain carries Phosphoserine; by DYRK2. At Ser717 the chain carries Phosphoserine.

It belongs to the eIF-2B gamma/epsilon subunits family. In terms of assembly, component of the translation initiation factor 2B (eIF2B) complex which is a heterodecamer of two sets of five different subunits: alpha, beta, gamma, delta and epsilon. Subunits alpha, beta and delta comprise a regulatory subcomplex and subunits epsilon and gamma comprise a catalytic subcomplex. Within the complex, the hexameric regulatory complex resides at the center, with the two heterodimeric catalytic subcomplexes bound on opposite sides. In terms of processing, phosphorylated at Ser-544 by DYRK2; this is required for subsequent phosphorylation by GSK3B. Phosphorylated on serine and threonine residues by GSK3B; phosphorylation inhibits its function. Post-translationally, polyubiquitinated, probably by NEDD4.

The protein localises to the cytoplasm. It is found in the cytosol. With respect to regulation, activated by the chemical integrated stress response (ISR) inhibitor ISRIB which stimulates guanine nucleotide exchange factor activity for both phosphorylated and unphosphorylated eIF2. In terms of biological role, acts as a component of the translation initiation factor 2B (eIF2B) complex, which catalyzes the exchange of GDP for GTP on eukaryotic initiation factor 2 (eIF2) gamma subunit. Its guanine nucleotide exchange factor activity is repressed when bound to eIF2 complex phosphorylated on the alpha subunit, thereby limiting the amount of methionyl-initiator methionine tRNA available to the ribosome and consequently global translation is repressed. This Homo sapiens (Human) protein is Translation initiation factor eIF2B subunit epsilon (EIF2B5).